A 609-amino-acid chain; its full sequence is Arginine--tRNA ligase (609 aa).

Positions 132 to 142 (ANPTSSLHVGH) match the 'HIGH' region motif.

This sequence belongs to the class-I aminoacyl-tRNA synthetase family. In terms of assembly, monomer.

Its subcellular location is the cytoplasm. The enzyme catalyses tRNA(Arg) + L-arginine + ATP = L-arginyl-tRNA(Arg) + AMP + diphosphate. This chain is Arginine--tRNA ligase, found in Psychrobacter cryohalolentis (strain ATCC BAA-1226 / DSM 17306 / VKM B-2378 / K5).